A 363-amino-acid chain; its full sequence is NAD(P)H-quinone oxidoreductase subunit 1, chloroplastic (363 aa).

A run of 6 helical transmembrane segments spans residues Leu-30–Leu-50, Phe-98–Phe-118, Ile-129–Gly-149, Tyr-248–Ser-268, Ile-300–Ile-320, and Phe-343–Leu-363.

It belongs to the complex I subunit 1 family. NDH is composed of at least 16 different subunits, 5 of which are encoded in the nucleus.

It is found in the plastid. The protein localises to the chloroplast thylakoid membrane. It catalyses the reaction a plastoquinone + NADH + (n+1) H(+)(in) = a plastoquinol + NAD(+) + n H(+)(out). It carries out the reaction a plastoquinone + NADPH + (n+1) H(+)(in) = a plastoquinol + NADP(+) + n H(+)(out). NDH shuttles electrons from NAD(P)H:plastoquinone, via FMN and iron-sulfur (Fe-S) centers, to quinones in the photosynthetic chain and possibly in a chloroplast respiratory chain. The immediate electron acceptor for the enzyme in this species is believed to be plastoquinone. Couples the redox reaction to proton translocation, and thus conserves the redox energy in a proton gradient. This Gossypium hirsutum (Upland cotton) protein is NAD(P)H-quinone oxidoreductase subunit 1, chloroplastic.